The primary structure comprises 274 residues: Diaminopimelate epimerase (274 aa).

Residues Asn-11, Gln-44, and Asn-64 each coordinate substrate. Cys-73 acts as the Proton donor in catalysis. Residues 74 to 75 (GN), Asn-157, Asn-190, and 208 to 209 (ER) contribute to the substrate site. Residue Cys-217 is the Proton acceptor of the active site. Residue 218–219 (GS) coordinates substrate.

The protein belongs to the diaminopimelate epimerase family. As to quaternary structure, homodimer.

The protein resides in the cytoplasm. It catalyses the reaction (2S,6S)-2,6-diaminopimelate = meso-2,6-diaminopimelate. It functions in the pathway amino-acid biosynthesis; L-lysine biosynthesis via DAP pathway; DL-2,6-diaminopimelate from LL-2,6-diaminopimelate: step 1/1. Its function is as follows. Catalyzes the stereoinversion of LL-2,6-diaminopimelate (L,L-DAP) to meso-diaminopimelate (meso-DAP), a precursor of L-lysine and an essential component of the bacterial peptidoglycan. The protein is Diaminopimelate epimerase of Serratia proteamaculans (strain 568).